The sequence spans 113 residues: UPF0342 protein MGAS10750_Spy0713 (113 aa).

It belongs to the UPF0342 family.

This chain is UPF0342 protein MGAS10750_Spy0713, found in Streptococcus pyogenes serotype M4 (strain MGAS10750).